A 142-amino-acid polypeptide reads, in one-letter code: Lysozyme X (142 aa).

The N-terminal stretch at 1–19 (MRALLGICVLALVTPAVLG) is a signal peptide. One can recognise a C-type lysozyme domain in the interval 20-142 (RTMDRCSLAR…YLPPIDDCFV (123 aa)). 4 disulfides stabilise this stretch: C25–C140, C46–C130, C81–C97, and C93–C111. Catalysis depends on residues E51 and D69.

It belongs to the glycosyl hydrolase 22 family. Found in the midgut.

It carries out the reaction Hydrolysis of (1-&gt;4)-beta-linkages between N-acetylmuramic acid and N-acetyl-D-glucosamine residues in a peptidoglycan and between N-acetyl-D-glucosamine residues in chitodextrins.. Its function is as follows. Unlikely to play an active role in the humoral immune defense. May have a function in the digestion of bacteria in the food. May be involved in the clearance of bacteria from the larval gut before metamorphosis. The chain is Lysozyme X (LysX) from Drosophila melanogaster (Fruit fly).